The sequence spans 505 residues: Protein nucleotidyltransferase YdiU (505 aa).

ATP contacts are provided by G102, G104, R105, K125, D137, G138, R188, and R195. The active-site Proton acceptor is D264. Residues N265 and D274 each coordinate Mg(2+). D274 is a binding site for ATP. Positions F485–T505 are disordered.

The protein belongs to the SELO family. Mg(2+) is required as a cofactor. Requires Mn(2+) as cofactor.

It catalyses the reaction L-seryl-[protein] + ATP = 3-O-(5'-adenylyl)-L-seryl-[protein] + diphosphate. The catalysed reaction is L-threonyl-[protein] + ATP = 3-O-(5'-adenylyl)-L-threonyl-[protein] + diphosphate. It carries out the reaction L-tyrosyl-[protein] + ATP = O-(5'-adenylyl)-L-tyrosyl-[protein] + diphosphate. The enzyme catalyses L-histidyl-[protein] + UTP = N(tele)-(5'-uridylyl)-L-histidyl-[protein] + diphosphate. It catalyses the reaction L-seryl-[protein] + UTP = O-(5'-uridylyl)-L-seryl-[protein] + diphosphate. The catalysed reaction is L-tyrosyl-[protein] + UTP = O-(5'-uridylyl)-L-tyrosyl-[protein] + diphosphate. Nucleotidyltransferase involved in the post-translational modification of proteins. It can catalyze the addition of adenosine monophosphate (AMP) or uridine monophosphate (UMP) to a protein, resulting in modifications known as AMPylation and UMPylation. In Nitrobacter hamburgensis (strain DSM 10229 / NCIMB 13809 / X14), this protein is Protein nucleotidyltransferase YdiU.